The sequence spans 94 residues: Large ribosomal subunit protein bL25 (94 aa).

It belongs to the bacterial ribosomal protein bL25 family. As to quaternary structure, part of the 50S ribosomal subunit; part of the 5S rRNA/L5/L18/L25 subcomplex. Contacts the 5S rRNA. Binds to the 5S rRNA independently of L5 and L18.

Its function is as follows. This is one of the proteins that binds to the 5S RNA in the ribosome where it forms part of the central protuberance. This Klebsiella pneumoniae (strain 342) protein is Large ribosomal subunit protein bL25.